The sequence spans 531 residues: Apolipoprotein N-acyltransferase (531 aa).

7 consecutive transmembrane segments (helical) span residues 8-28 (IILL…LLAV), 34-54 (FGIF…IDGV), 69-89 (PAAI…WWLG), 105-125 (LAVV…VVIA), 136-156 (IAAL…VFTG), 178-198 (VVNL…PALI), and 207-227 (GLAI…YRLA). Positions 243–493 (VQPVIDQAKK…RGVLDTILPG (251 aa)) constitute a CN hydrolase domain. Residue glutamate 287 is the Proton acceptor of the active site. Lysine 351 is an active-site residue. Cysteine 405 (nucleophile) is an active-site residue. A helical transmembrane segment spans residues 507-527 (IFWLSMAILSIVASFSRFGFN).

The protein belongs to the CN hydrolase family. Apolipoprotein N-acyltransferase subfamily.

The protein localises to the cell inner membrane. The catalysed reaction is N-terminal S-1,2-diacyl-sn-glyceryl-L-cysteinyl-[lipoprotein] + a glycerophospholipid = N-acyl-S-1,2-diacyl-sn-glyceryl-L-cysteinyl-[lipoprotein] + a 2-acyl-sn-glycero-3-phospholipid + H(+). It functions in the pathway protein modification; lipoprotein biosynthesis (N-acyl transfer). In terms of biological role, catalyzes the phospholipid dependent N-acylation of the N-terminal cysteine of apolipoprotein, the last step in lipoprotein maturation. The polypeptide is Apolipoprotein N-acyltransferase (Sinorhizobium medicae (strain WSM419) (Ensifer medicae)).